A 110-amino-acid polypeptide reads, in one-letter code: uncharacterized protein (110 aa).

This is an uncharacterized protein from Schizosaccharomyces pombe (strain 972 / ATCC 24843) (Fission yeast).